The primary structure comprises 350 residues: Methylthioribose-1-phosphate isomerase (350 aa).

Substrate contacts are provided by residues 47–49, R89, and Q196; that span reads RGA. The active-site Proton donor is the D237. 247-248 provides a ligand contact to substrate; that stretch reads NK.

Belongs to the eIF-2B alpha/beta/delta subunits family. MtnA subfamily.

The catalysed reaction is 5-(methylsulfanyl)-alpha-D-ribose 1-phosphate = 5-(methylsulfanyl)-D-ribulose 1-phosphate. Its pathway is amino-acid biosynthesis; L-methionine biosynthesis via salvage pathway; L-methionine from S-methyl-5-thio-alpha-D-ribose 1-phosphate: step 1/6. Its function is as follows. Catalyzes the interconversion of methylthioribose-1-phosphate (MTR-1-P) into methylthioribulose-1-phosphate (MTRu-1-P). In Nitratidesulfovibrio vulgaris (strain DSM 19637 / Miyazaki F) (Desulfovibrio vulgaris), this protein is Methylthioribose-1-phosphate isomerase.